Here is a 553-residue protein sequence, read N- to C-terminus: NAD(P)H-quinone oxidoreductase chain 4 2 (553 aa).

A run of 14 helical transmembrane segments spans residues Phe6 to Ile26, Val34 to Leu54, Ile87 to Trp107, Leu115 to Asp135, Leu136 to Ile156, Phe169 to Leu189, Ala210 to Phe230, Ser244 to Ile264, Ile276 to Ala296, Val312 to Gly332, Ala333 to Val353, Val376 to Phe396, Val418 to Met438, and Ile487 to Ala507.

The protein belongs to the complex I subunit 4 family.

The protein resides in the cellular thylakoid membrane. It catalyses the reaction a plastoquinone + NADH + (n+1) H(+)(in) = a plastoquinol + NAD(+) + n H(+)(out). The enzyme catalyses a plastoquinone + NADPH + (n+1) H(+)(in) = a plastoquinol + NADP(+) + n H(+)(out). NDH-1 shuttles electrons from NAD(P)H, via FMN and iron-sulfur (Fe-S) centers, to quinones in the respiratory chain. The immediate electron acceptor for the enzyme in this species is believed to be plastoquinone. Couples the redox reaction to proton translocation (for every two electrons transferred, four hydrogen ions are translocated across the cytoplasmic membrane), and thus conserves the redox energy in a proton gradient. In Microcystis aeruginosa (strain NIES-843 / IAM M-2473), this protein is NAD(P)H-quinone oxidoreductase chain 4 2.